Consider the following 350-residue polypeptide: Histidinol-phosphate aminotransferase (350 aa).

N6-(pyridoxal phosphate)lysine is present on Lys-220.

It belongs to the class-II pyridoxal-phosphate-dependent aminotransferase family. Histidinol-phosphate aminotransferase subfamily. In terms of assembly, homodimer. Pyridoxal 5'-phosphate is required as a cofactor.

It catalyses the reaction L-histidinol phosphate + 2-oxoglutarate = 3-(imidazol-4-yl)-2-oxopropyl phosphate + L-glutamate. It functions in the pathway amino-acid biosynthesis; L-histidine biosynthesis; L-histidine from 5-phospho-alpha-D-ribose 1-diphosphate: step 7/9. The chain is Histidinol-phosphate aminotransferase from Macrococcus caseolyticus (strain JCSC5402) (Macrococcoides caseolyticum).